Here is a 334-residue protein sequence, read N- to C-terminus: NADH-ubiquinone oxidoreductase chain 1 (334 aa).

Transmembrane regions (helical) follow at residues 4–24, 82–102, 115–135, 161–181, 187–207, 222–242, 247–267, 268–288, and 311–331; these read FVFLMIIETIHIILKILIIVI, FIYVAAPVLSFTLALIAWGVI, IGILFTLAVSSISVYAILMSG, IGLIIITVILCVGSLNITEIV, GIWFFFPLFPVAMMFFASALA, ELVSGYNVEYASMSFALFFLA, IILMSCLTTILFLGGWLSPIV, FFKGGPAWFGLKTSFIILLFI, and LPLSLAFVVLVASLLFGLNGL.

It belongs to the complex I subunit 1 family.

The protein resides in the mitochondrion inner membrane. It catalyses the reaction a ubiquinone + NADH + 5 H(+)(in) = a ubiquinol + NAD(+) + 4 H(+)(out). In terms of biological role, core subunit of the mitochondrial membrane respiratory chain NADH dehydrogenase (Complex I) that is believed to belong to the minimal assembly required for catalysis. Complex I functions in the transfer of electrons from NADH to the respiratory chain. The immediate electron acceptor for the enzyme is believed to be ubiquinone. The chain is NADH-ubiquinone oxidoreductase chain 1 (ND1) from Metridium senile (Brown sea anemone).